The sequence spans 419 residues: Transcription termination factor Rho (419 aa).

A Rho RNA-BD domain is found at 48–123; sequence DIFGDGVLEI…LKVNEVNYDK (76 aa). RNA-binding stretches follow at residues 61–66, 78–80, and 108–110; these read GFGFLR, DIY, and ERY. Residues 169 to 174, 181 to 186, and Arg212 each bind ATP; these read GRGQRG and KAGKTI. The tract at residues 284–288 is RNA-binding 2; sequence VLTGG.

Belongs to the Rho family. In terms of assembly, homohexamer. The homohexamer assembles into an open ring structure.

Functionally, facilitates transcription termination by a mechanism that involves Rho binding to the nascent RNA, activation of Rho's RNA-dependent ATPase activity, and release of the mRNA from the DNA template. In Buchnera aphidicola subsp. Acyrthosiphon pisum (strain APS) (Acyrthosiphon pisum symbiotic bacterium), this protein is Transcription termination factor Rho.